We begin with the raw amino-acid sequence, 214 residues long: RING-H2 finger protein ATL67 (214 aa).

Residues 33 to 53 (LGFGYSIAIALGFLVLLSTVL) traverse the membrane as a helical segment. Residues 138–180 (CSICLCEYKEAEMLRMMPECKHYFHLCCLDAWLKLNGSCPVCR) form an RING-type; atypical zinc finger.

The protein belongs to the RING-type zinc finger family. ATL subfamily.

The protein localises to the membrane. The enzyme catalyses S-ubiquitinyl-[E2 ubiquitin-conjugating enzyme]-L-cysteine + [acceptor protein]-L-lysine = [E2 ubiquitin-conjugating enzyme]-L-cysteine + N(6)-ubiquitinyl-[acceptor protein]-L-lysine.. Its pathway is protein modification; protein ubiquitination. This chain is RING-H2 finger protein ATL67 (ATL67), found in Arabidopsis thaliana (Mouse-ear cress).